The sequence spans 382 residues: Fimbrial usher domain-containing protein YdeT (382 aa).

This is Fimbrial usher domain-containing protein YdeT (ydeT) from Escherichia coli O157:H7.